The sequence spans 317 residues: Melanocyte-stimulating hormone receptor (317 aa).

Residues 1 to 37 (MPVQGSQRRLLGSLNSTPTATPHLGLAANQTGARCLE) are Extracellular-facing. Asn-29 carries N-linked (GlcNAc...) asparagine glycosylation. The chain crosses the membrane as a helical span at residues 38–63 (VSIPDGLFLSLGLVSLVENVLVVTAI). Residues 64-72 (AKNRNLHSP) are Cytoplasmic-facing. A helical membrane pass occupies residues 73 to 93 (MYCFICCLALSDLLVSGSNML). Residues 94-118 (ETAVILLLEAGALAARAAVVQQLDN) are Extracellular-facing. The helical transmembrane segment at 119–140 (VIDVITCSSMLSSLCFLGAIAV) threads the bilayer. Residues 141-163 (DRYISIFYALRYHSIVTLPRARR) lie on the Cytoplasmic side of the membrane. A helical membrane pass occupies residues 164–183 (AVAAIWVASVLFSMLFIAYY). The Extracellular segment spans residues 184–191 (DHAAVLLC). A helical transmembrane segment spans residues 192–211 (LVVFFLAMLVLMAVLYVHML). Over 212–240 (ARACQHAQGIARLHKRQCPAHQGFGLKGA) the chain is Cytoplasmic. A helical membrane pass occupies residues 241-266 (ATLTILLGIFFLCWGPFFLHLTLIVL). Residues 267-279 (CPQHPTCSCIFKN) are Extracellular-facing. The chain crosses the membrane as a helical span at residues 280–300 (FNLFLALIICNAIIDPLIYAF). Topologically, residues 301-317 (RSQELRRTLKEVLLCSW) are cytoplasmic. The S-palmitoyl cysteine moiety is linked to residue Cys-315.

The protein belongs to the G-protein coupled receptor 1 family. As to quaternary structure, interacts with MGRN1, but does not undergo MGRN1-mediated ubiquitination; this interaction competes with GNAS-binding and thus inhibits agonist-induced cAMP production. Interacts with OPN3; the interaction results in a decrease in MC1R-mediated cAMP signaling and ultimately a decrease in melanin production in melanocytes.

The protein localises to the cell membrane. Functionally, receptor for MSH (alpha, beta and gamma) and ACTH. The activity of this receptor is mediated by G proteins which activate adenylate cyclase. Mediates melanogenesis, the production of eumelanin (black/brown) and phaeomelanin (red/yellow), via regulation of cAMP signaling in melanocytes. The sequence is that of Melanocyte-stimulating hormone receptor (MC1R) from Chlorocebus aethiops (Green monkey).